The following is a 490-amino-acid chain: Bifunctional dihydrocamalexate synthase/camalexin synthase (490 aa).

A helical membrane pass occupies residues methionine 1–leucine 21.

It belongs to the cytochrome P450 family.

The protein localises to the membrane. It catalyses the reaction 2-(L-cystein-S-yl)-2-(1H-indol-3-yl)-acetonitrile + 2 reduced [NADPH--hemoprotein reductase] + 2 O2 = camalexin + hydrogen cyanide + 2 oxidized [NADPH--hemoprotein reductase] + CO2 + 4 H2O + 2 H(+). The catalysed reaction is 2-(L-cystein-S-yl)-2-(1H-indol-3-yl)-acetonitrile + reduced [NADPH--hemoprotein reductase] + O2 = (R)-dihydrocamalexate + hydrogen cyanide + oxidized [NADPH--hemoprotein reductase] + 2 H2O + 2 H(+). It carries out the reaction (R)-dihydrocamalexate + reduced [NADPH--hemoprotein reductase] + O2 = camalexin + oxidized [NADPH--hemoprotein reductase] + CO2 + 2 H2O. Functionally, multifunctional enzyme involved in the biosynthesis of the indole-derived phytoalexin camalexin. Catalyzes two reactions, the formation of dihydrocamalexate from indole-3-acetonitrile-cysteine conjugate and the oxidative decarboxylation of dihydrocamalexate which is the final step in camalexin biosynthesis. Required for the resistance to the fungal pathogens A.brassicicola, B.cinerea, B.elliptica, B.tulipae, L.maculans and Colletotrichum higginsianum. Seems not to be required for resistance to P.syringae, P.porri, and not involved in age-related resistance. The polypeptide is Bifunctional dihydrocamalexate synthase/camalexin synthase (CYP71B15) (Arabidopsis thaliana (Mouse-ear cress)).